The sequence spans 397 residues: Acetate kinase (397 aa).

Asn-7 is a binding site for Mg(2+). Lys-14 provides a ligand contact to ATP. Arg-88 provides a ligand contact to substrate. Residue Asp-145 is the Proton donor/acceptor of the active site. Residues 205 to 209 (HLGNG), 279 to 281 (DMR), and 326 to 330 (GIGEN) each bind ATP. A Mg(2+)-binding site is contributed by Glu-380.

It belongs to the acetokinase family. Homodimer. The cofactor is Mg(2+). Requires Mn(2+) as cofactor.

The protein localises to the cytoplasm. It catalyses the reaction acetate + ATP = acetyl phosphate + ADP. Its pathway is metabolic intermediate biosynthesis; acetyl-CoA biosynthesis; acetyl-CoA from acetate: step 1/2. Catalyzes the formation of acetyl phosphate from acetate and ATP. Can also catalyze the reverse reaction. In Campylobacter concisus (strain 13826), this protein is Acetate kinase.